Consider the following 249-residue polypeptide: Ribosomal RNA small subunit methyltransferase J (249 aa).

Position 169 (aspartate 169) interacts with S-adenosyl-L-methionine.

This sequence belongs to the methyltransferase superfamily. RsmJ family.

The protein resides in the cytoplasm. It catalyses the reaction guanosine(1516) in 16S rRNA + S-adenosyl-L-methionine = N(2)-methylguanosine(1516) in 16S rRNA + S-adenosyl-L-homocysteine + H(+). Its function is as follows. Specifically methylates the guanosine in position 1516 of 16S rRNA. In Buchnera aphidicola subsp. Schizaphis graminum (strain Sg), this protein is Ribosomal RNA small subunit methyltransferase J.